The following is a 357-amino-acid chain: Inositol-tetrakisphosphate 1-kinase 3 (357 aa).

1D-myo-inositol 1,3,4-trisphosphate is bound by residues Lys56 and Lys98. ATP-binding residues include Arg133 and Lys183. The 1D-myo-inositol 1,3,4-trisphosphate site is built by His190 and Lys222. ATP-binding positions include 211–222 (QEFVNHGGVLFK), Ser237, and Ser262. Residues Asp302, Asp317, and Asn319 each coordinate Mg(2+). 1D-myo-inositol 1,3,4-trisphosphate is bound at residue Asn319.

The protein belongs to the ITPK1 family. As to quaternary structure, monomer. It depends on Mg(2+) as a cofactor.

The enzyme catalyses 1D-myo-inositol 3,4,5,6-tetrakisphosphate + ATP = 1D-myo-inositol 1,3,4,5,6-pentakisphosphate + ADP + H(+). The catalysed reaction is 1D-myo-inositol 1,3,4-trisphosphate + ATP = 1D-myo-inositol 1,3,4,5-tetrakisphosphate + ADP + H(+). It catalyses the reaction 1D-myo-inositol 1,3,4-trisphosphate + ATP = 1D-myo-inositol 1,3,4,6-tetrakisphosphate + ADP + H(+). Kinase that can phosphorylate various inositol polyphosphate such as Ins(3,4,5,6)P4 or Ins(1,3,4)P3 and participates in phytic acid biosynthesis in developing seeds. Phytic acid is the primary storage form of phosphorus in cereal grains and other plant seeds. The sequence is that of Inositol-tetrakisphosphate 1-kinase 3 (ITPK3) from Oryza sativa subsp. indica (Rice).